The sequence spans 312 residues: Methionyl-tRNA formyltransferase (312 aa).

109 to 112 (SLLP) contacts (6S)-5,6,7,8-tetrahydrofolate.

This sequence belongs to the Fmt family.

The catalysed reaction is L-methionyl-tRNA(fMet) + (6R)-10-formyltetrahydrofolate = N-formyl-L-methionyl-tRNA(fMet) + (6S)-5,6,7,8-tetrahydrofolate + H(+). Its function is as follows. Attaches a formyl group to the free amino group of methionyl-tRNA(fMet). The formyl group appears to play a dual role in the initiator identity of N-formylmethionyl-tRNA by promoting its recognition by IF2 and preventing the misappropriation of this tRNA by the elongation apparatus. The sequence is that of Methionyl-tRNA formyltransferase from Anaeromyxobacter dehalogenans (strain 2CP-1 / ATCC BAA-258).